A 506-amino-acid chain; its full sequence is Maturase K (506 aa).

This sequence belongs to the intron maturase 2 family. MatK subfamily.

Its subcellular location is the plastid. The protein localises to the chloroplast. In terms of biological role, usually encoded in the trnK tRNA gene intron. Probably assists in splicing its own and other chloroplast group II introns. This Atractylodes lancea (Atractylodes japonica) protein is Maturase K.